Reading from the N-terminus, the 258-residue chain is Na(+)-translocating NADH-quinone reductase subunit C (258 aa).

Residues 14–34 (LIVVLAVSLICSVIVAGAVVG) form a helical membrane-spanning segment. Residue Ser-226 is modified to FMN phosphoryl serine.

This sequence belongs to the NqrC family. In terms of assembly, composed of six subunits; NqrA, NqrB, NqrC, NqrD, NqrE and NqrF. FMN is required as a cofactor.

Its subcellular location is the cell inner membrane. The catalysed reaction is a ubiquinone + n Na(+)(in) + NADH + H(+) = a ubiquinol + n Na(+)(out) + NAD(+). Its function is as follows. NQR complex catalyzes the reduction of ubiquinone-1 to ubiquinol by two successive reactions, coupled with the transport of Na(+) ions from the cytoplasm to the periplasm. NqrA to NqrE are probably involved in the second step, the conversion of ubisemiquinone to ubiquinol. The chain is Na(+)-translocating NADH-quinone reductase subunit C from Neisseria meningitidis serogroup A / serotype 4A (strain DSM 15465 / Z2491).